A 216-amino-acid polypeptide reads, in one-letter code: Adenylate kinase (216 aa).

Residue 10 to 15 (GAGKGT) coordinates ATP. The segment at 30–59 (STGDMLRAAVKAETPVGLKAKAVMEAGQLV) is NMP. AMP is bound by residues threonine 31, arginine 36, 57–59 (QLV), 85–88 (GYPR), and glutamine 92. Positions 126–164 (GRYTCATCGKGYHDKFEKPAVEGTCDKCGGHEFKRRPDD) are LID. Arginine 127 is a binding site for ATP. Residues cysteine 130, cysteine 133, cysteine 150, and cysteine 153 each contribute to the Zn(2+) site. Residues arginine 161 and arginine 172 each contribute to the AMP site. Alanine 200 is a binding site for ATP.

This sequence belongs to the adenylate kinase family. In terms of assembly, monomer.

It is found in the cytoplasm. The enzyme catalyses AMP + ATP = 2 ADP. The protein operates within purine metabolism; AMP biosynthesis via salvage pathway; AMP from ADP: step 1/1. Functionally, catalyzes the reversible transfer of the terminal phosphate group between ATP and AMP. Plays an important role in cellular energy homeostasis and in adenine nucleotide metabolism. The protein is Adenylate kinase of Novosphingobium aromaticivorans (strain ATCC 700278 / DSM 12444 / CCUG 56034 / CIP 105152 / NBRC 16084 / F199).